Consider the following 42-residue polypeptide: Photosystem I reaction center subunit IX (42 aa).

A helical transmembrane segment spans residues 7 to 27 (YLSVAPVLSTLWFGILAGLLI).

It belongs to the PsaJ family.

The protein localises to the plastid. Its subcellular location is the chloroplast thylakoid membrane. May help in the organization of the PsaE and PsaF subunits. In Lemna minor (Common duckweed), this protein is Photosystem I reaction center subunit IX.